The chain runs to 301 residues: D-alanine--D-alanine ligase A (301 aa).

The 195-residue stretch at Lys-96–Glu-290 folds into the ATP-grasp domain. Residue Leu-123–Thr-178 participates in ATP binding. Positions 245, 257, and 259 each coordinate Mg(2+).

It belongs to the D-alanine--D-alanine ligase family. Mg(2+) is required as a cofactor. It depends on Mn(2+) as a cofactor.

The protein resides in the cytoplasm. It carries out the reaction 2 D-alanine + ATP = D-alanyl-D-alanine + ADP + phosphate + H(+). The protein operates within cell wall biogenesis; peptidoglycan biosynthesis. Cell wall formation. In Bacillus cereus (strain ATCC 14579 / DSM 31 / CCUG 7414 / JCM 2152 / NBRC 15305 / NCIMB 9373 / NCTC 2599 / NRRL B-3711), this protein is D-alanine--D-alanine ligase A.